The following is a 308-amino-acid chain: ADP-L-glycero-D-manno-heptose-6-epimerase (308 aa).

Residues 10 to 11, 31 to 32, lysine 38, lysine 53, 75 to 79, and asparagine 92 each bind NADP(+); these read MI, DN, and EGACS. The Proton acceptor role is filled by tyrosine 140. Lysine 144 serves as a coordination point for NADP(+). Residue asparagine 169 coordinates substrate. Valine 170 and lysine 178 together coordinate NADP(+). Catalysis depends on lysine 178, which acts as the Proton acceptor. Substrate is bound by residues serine 180, histidine 187, 201 to 204, arginine 209, and tyrosine 272; that span reads FEGS.

It belongs to the NAD(P)-dependent epimerase/dehydratase family. HldD subfamily. As to quaternary structure, homopentamer. NADP(+) is required as a cofactor.

It carries out the reaction ADP-D-glycero-beta-D-manno-heptose = ADP-L-glycero-beta-D-manno-heptose. It functions in the pathway nucleotide-sugar biosynthesis; ADP-L-glycero-beta-D-manno-heptose biosynthesis; ADP-L-glycero-beta-D-manno-heptose from D-glycero-beta-D-manno-heptose 7-phosphate: step 4/4. In terms of biological role, catalyzes the interconversion between ADP-D-glycero-beta-D-manno-heptose and ADP-L-glycero-beta-D-manno-heptose via an epimerization at carbon 6 of the heptose. The polypeptide is ADP-L-glycero-D-manno-heptose-6-epimerase (Actinobacillus pleuropneumoniae serotype 7 (strain AP76)).